Consider the following 164-residue polypeptide: uncharacterized protein (164 aa).

Residues 1-18 (MILILTIIVGFLIYFVTA) form the signal peptide. N88 carries an N-linked (GlcNAc...) asparagine; by host glycan.

This sequence belongs to the IIV-6 357R family.

This is an uncharacterized protein from Acheta domesticus (House cricket).